We begin with the raw amino-acid sequence, 156 residues long: Endoribonuclease YbeY (156 aa).

Residues H105, H109, and D115 each coordinate Zn(2+).

It belongs to the endoribonuclease YbeY family. The cofactor is Zn(2+).

It localises to the cytoplasm. In terms of biological role, single strand-specific metallo-endoribonuclease involved in late-stage 70S ribosome quality control and in maturation of the 3' terminus of the 16S rRNA. This Chlorobium chlorochromatii (strain CaD3) protein is Endoribonuclease YbeY.